The sequence spans 560 residues: 5'-nucleotidase (560 aa).

Residues 1 to 21 (MNQRLIIKTALSAAILASLAG) form the signal peptide. The N-palmitoyl cysteine moiety is linked to residue Cys22. Cys22 carries S-diacylglycerol cysteine lipidation. The a divalent metal cation site is built by Asp45, His47, Asp88, Asn120, His221, His256, and Gln258. Substrate contacts are provided by residues Phe432 and 501–507 (YNASGGD).

The protein belongs to the 5'-nucleotidase family. The cofactor is chloride. It depends on Mg(2+) as a cofactor.

Its subcellular location is the cell outer membrane. The enzyme catalyses a ribonucleoside 5'-phosphate + H2O = a ribonucleoside + phosphate. Degradation of extracellular 5'-nucleotides for nutritional needs. The sequence is that of 5'-nucleotidase (nutA) from Vibrio parahaemolyticus serotype O3:K6 (strain RIMD 2210633).